The chain runs to 134 residues: MSEQPAPAPVPVLPAEVADALKRDAAGLVAAVVQQFDTNEVLMLGWMDDEALRRTMTSGRVTFYSRSRQEYWRKGDTSGHVQWVKSVALDCDGDALLVRVDQVGAACHTGTRTCFDGRGLPVVAGDAGAAGNAS.

Position 90 (Asp-90) interacts with Mg(2+). Cys-91 provides a ligand contact to Zn(2+). The Mg(2+) site is built by Asp-92 and Asp-94. Zn(2+) is bound by residues Cys-107 and Cys-114.

This sequence belongs to the PRA-CH family. In terms of assembly, homodimer. Mg(2+) serves as cofactor. Requires Zn(2+) as cofactor.

It localises to the cytoplasm. The catalysed reaction is 1-(5-phospho-beta-D-ribosyl)-5'-AMP + H2O = 1-(5-phospho-beta-D-ribosyl)-5-[(5-phospho-beta-D-ribosylamino)methylideneamino]imidazole-4-carboxamide. Its pathway is amino-acid biosynthesis; L-histidine biosynthesis; L-histidine from 5-phospho-alpha-D-ribose 1-diphosphate: step 3/9. Its function is as follows. Catalyzes the hydrolysis of the adenine ring of phosphoribosyl-AMP. In Arthrobacter sp. (strain FB24), this protein is Phosphoribosyl-AMP cyclohydrolase.